A 409-amino-acid chain; its full sequence is Argininosuccinate synthase (409 aa).

Residues 10–18 (AYSGGLDTS) and A37 contribute to the ATP site. L-citrulline contacts are provided by Y90 and S95. Residue G120 coordinates ATP. L-aspartate is bound by residues T122, N126, and D127. An L-citrulline-binding site is contributed by N126. Residues R130, S182, S191, E267, and Y279 each contribute to the L-citrulline site.

It belongs to the argininosuccinate synthase family. Type 1 subfamily. As to quaternary structure, homotetramer.

The protein resides in the cytoplasm. The catalysed reaction is L-citrulline + L-aspartate + ATP = 2-(N(omega)-L-arginino)succinate + AMP + diphosphate + H(+). The protein operates within amino-acid biosynthesis; L-arginine biosynthesis; L-arginine from L-ornithine and carbamoyl phosphate: step 2/3. The protein is Argininosuccinate synthase of Aromatoleum aromaticum (strain DSM 19018 / LMG 30748 / EbN1) (Azoarcus sp. (strain EbN1)).